The following is a 369-amino-acid chain: S-adenosylmethionine decarboxylase proenzyme 2 (369 aa).

Catalysis depends on residues Glu-9 and Glu-12. Ser-69 (schiff-base intermediate with substrate; via pyruvic acid) is an active-site residue. Ser-69 is modified (pyruvic acid (Ser); by autocatalysis). The active-site Proton donor; for catalytic activity is Cys-83. Catalysis depends on proton acceptor; for processing activity residues Ser-236 and His-249.

The protein belongs to the eukaryotic AdoMetDC family. It depends on pyruvate as a cofactor. In terms of processing, is synthesized initially as an inactive proenzyme. Formation of the active enzyme involves a self-maturation process in which the active site pyruvoyl group is generated from an internal serine residue via an autocatalytic post-translational modification. Two non-identical subunits are generated from the proenzyme in this reaction, and the pyruvate is formed at the N-terminus of the alpha chain, which is derived from the carboxyl end of the proenzyme. The post-translation cleavage follows an unusual pathway, termed non-hydrolytic serinolysis, in which the side chain hydroxyl group of the serine supplies its oxygen atom to form the C-terminus of the beta chain, while the remainder of the serine residue undergoes an oxidative deamination to produce ammonia and the pyruvoyl group blocking the N-terminus of the alpha chain.

It catalyses the reaction S-adenosyl-L-methionine + H(+) = S-adenosyl 3-(methylsulfanyl)propylamine + CO2. It participates in amine and polyamine biosynthesis; S-adenosylmethioninamine biosynthesis; S-adenosylmethioninamine from S-adenosyl-L-methionine: step 1/1. The sequence is that of S-adenosylmethionine decarboxylase proenzyme 2 (SAMDC2) from Brassica juncea (Indian mustard).